Consider the following 597-residue polypeptide: U3 small nucleolar RNA-associated protein 6 homolog (597 aa).

HAT repeat units follow at residues 121–153 (ATKTRLSKVFSAMLAIHSNKPALWIMAAKWEME), 156–188 (LSSESARQLFLRALRFHPECPKLYKEYFRMELM), 304–335 (RKEERCCAVYEEAVKTLPTEAMWKCYITFCLE), 488–520 (GGYKKARAVFKSLQESRPFSVDFFRKMIQFEKE), and 524–557 (CNMANIREYYERALREFGSADSDLWMDYMKEELN).

It belongs to the UTP6 family. Part of the small subunit (SSU) processome, composed of more than 70 proteins and the RNA chaperone small nucleolar RNA (snoRNA) U3.

It is found in the nucleus. The protein resides in the nucleolus. Functionally, part of the small subunit (SSU) processome, first precursor of the small eukaryotic ribosomal subunit. During the assembly of the SSU processome in the nucleolus, many ribosome biogenesis factors, an RNA chaperone and ribosomal proteins associate with the nascent pre-rRNA and work in concert to generate RNA folding, modifications, rearrangements and cleavage as well as targeted degradation of pre-ribosomal RNA by the RNA exosome. Involved in nucleolar processing of pre-18S ribosomal RNA. This Homo sapiens (Human) protein is U3 small nucleolar RNA-associated protein 6 homolog.